Here is a 473-residue protein sequence, read N- to C-terminus: Probable glycine dehydrogenase (decarboxylating) subunit 2 (473 aa).

A disordered region spans residues 1–40; that stretch reads MEHYEQARYAPAEGETNEPLLSENDQTTVSVDPSLPDDLT. The residue at position 270 (Lys-270) is an N6-(pyridoxal phosphate)lysine.

It belongs to the GcvP family. C-terminal subunit subfamily. The glycine cleavage system is composed of four proteins: P, T, L and H. In this organism, the P 'protein' is a heterodimer of two subunits. Requires pyridoxal 5'-phosphate as cofactor.

The enzyme catalyses N(6)-[(R)-lipoyl]-L-lysyl-[glycine-cleavage complex H protein] + glycine + H(+) = N(6)-[(R)-S(8)-aminomethyldihydrolipoyl]-L-lysyl-[glycine-cleavage complex H protein] + CO2. In terms of biological role, the glycine cleavage system catalyzes the degradation of glycine. The P protein binds the alpha-amino group of glycine through its pyridoxal phosphate cofactor; CO(2) is released and the remaining methylamine moiety is then transferred to the lipoamide cofactor of the H protein. The polypeptide is Probable glycine dehydrogenase (decarboxylating) subunit 2 (Halobacterium salinarum (strain ATCC 700922 / JCM 11081 / NRC-1) (Halobacterium halobium)).